A 203-amino-acid chain; its full sequence is Holliday junction branch migration complex subunit RuvA (203 aa).

Residues 1 to 64 (MIGRLRGIIL…EDAQLLYGFN (64 aa)) form a domain I region. A domain II region spans residues 65–142 (NKQERTLFKE…KGLHGDLFTP (78 aa)). The segment at 143–154 (AADLVLTSPAGP) is flexible linker. Residues 155–203 (TADDAEQEAVAALVALGYKPQEASRMVSKIARPDANSETLIREALRAAL) are domain III.

Belongs to the RuvA family. In terms of assembly, homotetramer. Forms an RuvA(8)-RuvB(12)-Holliday junction (HJ) complex. HJ DNA is sandwiched between 2 RuvA tetramers; dsDNA enters through RuvA and exits via RuvB. An RuvB hexamer assembles on each DNA strand where it exits the tetramer. Each RuvB hexamer is contacted by two RuvA subunits (via domain III) on 2 adjacent RuvB subunits; this complex drives branch migration. In the full resolvosome a probable DNA-RuvA(4)-RuvB(12)-RuvC(2) complex forms which resolves the HJ.

The protein localises to the cytoplasm. Functionally, the RuvA-RuvB-RuvC complex processes Holliday junction (HJ) DNA during genetic recombination and DNA repair, while the RuvA-RuvB complex plays an important role in the rescue of blocked DNA replication forks via replication fork reversal (RFR). RuvA specifically binds to HJ cruciform DNA, conferring on it an open structure. The RuvB hexamer acts as an ATP-dependent pump, pulling dsDNA into and through the RuvAB complex. HJ branch migration allows RuvC to scan DNA until it finds its consensus sequence, where it cleaves and resolves the cruciform DNA. In Klebsiella pneumoniae (strain 342), this protein is Holliday junction branch migration complex subunit RuvA.